We begin with the raw amino-acid sequence, 425 residues long: Serine--tRNA ligase (425 aa).

2 disordered regions span residues Gln-43–Lys-69 and Leu-108–Pro-134. The span at Pro-117–Pro-134 shows a compositional bias: basic and acidic residues. Thr-233–Glu-235 contacts L-serine. Arg-264–Glu-266 contacts ATP. Residue Glu-287 coordinates L-serine. An ATP-binding site is contributed by Glu-351 to Ser-354. Ser-385 contributes to the L-serine binding site.

Belongs to the class-II aminoacyl-tRNA synthetase family. Type-1 seryl-tRNA synthetase subfamily. In terms of assembly, homodimer. The tRNA molecule binds across the dimer.

The protein localises to the cytoplasm. The catalysed reaction is tRNA(Ser) + L-serine + ATP = L-seryl-tRNA(Ser) + AMP + diphosphate + H(+). It carries out the reaction tRNA(Sec) + L-serine + ATP = L-seryl-tRNA(Sec) + AMP + diphosphate + H(+). The protein operates within aminoacyl-tRNA biosynthesis; selenocysteinyl-tRNA(Sec) biosynthesis; L-seryl-tRNA(Sec) from L-serine and tRNA(Sec): step 1/1. In terms of biological role, catalyzes the attachment of serine to tRNA(Ser). Is also able to aminoacylate tRNA(Sec) with serine, to form the misacylated tRNA L-seryl-tRNA(Sec), which will be further converted into selenocysteinyl-tRNA(Sec). In Prochlorococcus marinus (strain MIT 9313), this protein is Serine--tRNA ligase.